Here is a 213-residue protein sequence, read N- to C-terminus: Kynurenine formamidase (213 aa).

Substrate is bound at residue W18. Residues H48, H52, and D54 each contribute to the Zn(2+) site. The active-site Proton donor/acceptor is H58. 2 residues coordinate Zn(2+): H160 and E172.

The protein belongs to the Cyclase 1 superfamily. KynB family. Homodimer. Zn(2+) serves as cofactor.

The catalysed reaction is N-formyl-L-kynurenine + H2O = L-kynurenine + formate + H(+). The protein operates within amino-acid degradation; L-tryptophan degradation via kynurenine pathway; L-kynurenine from L-tryptophan: step 2/2. Functionally, catalyzes the hydrolysis of N-formyl-L-kynurenine to L-kynurenine, the second step in the kynurenine pathway of tryptophan degradation. This is Kynurenine formamidase from Burkholderia cenocepacia (strain HI2424).